A 134-amino-acid chain; its full sequence is Small ribosomal subunit protein uS11 (134 aa).

The protein belongs to the universal ribosomal protein uS11 family. As to quaternary structure, part of the 30S ribosomal subunit. Interacts with proteins S7 and S18. Binds to IF-3.

Located on the platform of the 30S subunit, it bridges several disparate RNA helices of the 16S rRNA. Forms part of the Shine-Dalgarno cleft in the 70S ribosome. In Albidiferax ferrireducens (strain ATCC BAA-621 / DSM 15236 / T118) (Rhodoferax ferrireducens), this protein is Small ribosomal subunit protein uS11.